The primary structure comprises 85 residues: Cytochrome c oxidase assembly factor 3, mitochondrial (85 aa).

The Mitochondrial matrix portion of the chain corresponds to 1–26 (MVLNPSKYQDTRTWKMTPAMIRARKP). A helical membrane pass occupies residues 27-49 (FFKGNMLGLTLLLGVTGSVYYYT). Topologically, residues 50-85 (YHFLHKDNDFADVPIPPIDPQELEALKKEYEAKKKA) are mitochondrial intermembrane.

Belongs to the COA3 family. In terms of assembly, component of 250-400 kDa complexes called cytochrome oxidase assembly intermediates or COA complexes composed at least COA3, COX14, COX5A, SHY1 and SSC1. Interacts with COX1 and MSS51.

It is found in the mitochondrion inner membrane. In terms of biological role, required for assembly of cytochrome c oxidase (complex IV). With COX14, negatively regulates COX1 translation and is involved in MSS51 association with newly synthesized COX1. The protein is Cytochrome c oxidase assembly factor 3, mitochondrial (COA3) of Saccharomyces cerevisiae (strain RM11-1a) (Baker's yeast).